We begin with the raw amino-acid sequence, 267 residues long: Integral membrane protein 2C (267 aa).

Thr-37 is subject to Phosphothreonine. Residues 55 to 75 traverse the membrane as a helical; Signal-anchor for type II membrane protein segment; that stretch reads VGGVCYLSMGMVVLLMGLVFA. The BRICHOS domain occupies 136 to 230; sequence FGGGDPADII…LCNGKDTYRL (95 aa). Cys-163 and Cys-222 form a disulfide bridge. An N-linked (GlcNAc...) asparagine glycan is attached at Asn-169.

Belongs to the ITM2 family. As to quaternary structure, interacts with BACE1. Interacts with APP. Interacts with STMN2. In terms of processing, type I membrane-bound, as well as soluble, furin has a pre-eminent role in ITM2C proteolytic processing. PCSK7 and PCSK5 may also be involved although to a lesser extent. The soluble form of PCSK7 is incapable of processing ITM2C. Fails to undergo shedding by ADAM10 and intramembrane cleavage by SPPL2B. As to expression, high levels in the brain, specifically in the cerebral cortex, medulla, amygdala, hippocampus, thalamus, caudate nucleus, cerebellum, olfactory lobe and spinal cord. Very low levels in other organs.

It is found in the lysosome membrane. The protein resides in the cell membrane. Its function is as follows. Negative regulator of amyloid-beta peptide production. May inhibit the processing of APP by blocking its access to alpha- and beta-secretase. Binding to the beta-secretase-cleaved APP C-terminal fragment is negligible, suggesting that ITM2C is a poor gamma-secretase cleavage inhibitor. May play a role in TNF-induced cell death and neuronal differentiation. In Homo sapiens (Human), this protein is Integral membrane protein 2C (ITM2C).